The chain runs to 219 residues: MEISTNPPSSSSSSVSSSIINGSLHHHIITRSDHYPTTFVQADSSSFKQVVQMLTGSSSPRSPDSPRPPTTPSGKGNFVIPPIKTAQPKKHSGNKLYERRSHGGFNNNLKNSLMINTLMIGGGGAGSPRFSPRNQEILSPSCLDFPKLALNSPVTPLKQGTNGNEGDPFDKMSPLSEEERGIADKGYYLHRSPISTPRDSEPQLLPLFPVTSPRLSPEM.

The VQ signature appears at 47 to 56 (FKQVVQMLTG). Positions 52 to 94 (QMLTGSSSPRSPDSPRPPTTPSGKGNFVIPPIKTAQPKKHSGN) are disordered. Phosphoserine is present on residues Ser59, Ser65, Ser127, Ser131, Ser139, Ser141, and Ser152. Thr155 carries the post-translational modification Phosphothreonine. Disordered regions lie at residues 156-177 (PLKQ…PLSE) and 190-219 (HRSP…SPEM). 2 positions are modified to phosphoserine: Ser192 and Ser195. Thr196 and Thr211 each carry phosphothreonine. A phosphoserine mark is found at Ser212 and Ser216.

In terms of processing, phosphorylated on serine and threonine residues by MPK6.

It localises to the nucleus. May modulate WRKY transcription factor activities. This chain is VQ motif-containing protein 19, found in Arabidopsis thaliana (Mouse-ear cress).